The primary structure comprises 332 residues: MPEGPLVRKFHHLVSPFVGQQVVKTGGSSKKLQPASLQSLWLQDTQVHGKKLFLRFDLDEEMGPPGSSPTPEPPQKEVQKEGAADPKQVGEPSGQKTLDGSSRSAELVPQGEDDSEYLERDAPAGDAGRWLRVSFGLFGSVWVNDFSRAKKANKRGDWRDPSPRLVLHFGGGGFLAFYNCQLSWSSSPVVTPTCDILSEKFHRGQALEALGQAQPVCYTLLDQRYFSGLGNIIKNEALYRAGIHPLSLGSVLSASRREVLVDHVVEFSTAWLQGKFQGRPQHTQVYQKEQCPAGHQVMKEAFGPEDGLQRLTWWCPQCQPQLSEEPEQCQFS.

The Schiff-base intermediate with DNA role is filled by Pro-2. Glu-3 serves as the catalytic Proton donor. Lys-50 acts as the Proton donor; for beta-elimination activity in catalysis. Position 50 is an N6-acetyllysine (Lys-50). The disordered stretch occupies residues Asp-59 to Asp-121. Ser-68 is subject to Phosphoserine. The span at Pro-74 to Ala-84 shows a compositional bias: basic and acidic residues. The span at Gly-94–Ser-104 shows a compositional bias: polar residues. Lys-154 is subject to N6-acetyllysine. Residue Asn-231 coordinates DNA. Residues Gln-284–Pro-320 form an FPG-type zinc finger. Catalysis depends on Arg-310, which acts as the Proton donor; for delta-elimination activity.

This sequence belongs to the FPG family. In terms of assembly, binds EP300. Detected in testis, skeletal muscle, heart, brain, placenta, lung, pancreas, kidney and liver.

The protein resides in the nucleus. The catalysed reaction is 2'-deoxyribonucleotide-(2'-deoxyribose 5'-phosphate)-2'-deoxyribonucleotide-DNA = a 3'-end 2'-deoxyribonucleotide-(2,3-dehydro-2,3-deoxyribose 5'-phosphate)-DNA + a 5'-end 5'-phospho-2'-deoxyribonucleoside-DNA + H(+). With respect to regulation, acetylation of Lys-50 leads to loss of DNA nicking activity. Acetylation of Lys-154 has no effect. Its function is as follows. Involved in base excision repair of DNA damaged by oxidation or by mutagenic agents. Has DNA glycosylase activity towards 5-hydroxyuracil and other oxidized derivatives of cytosine with a preference for mismatched double-stranded DNA (DNA bubbles). Has low or no DNA glycosylase activity towards thymine glycol, 2-hydroxyadenine, hypoxanthine and 8-oxoguanine. Has AP (apurinic/apyrimidinic) lyase activity and introduces nicks in the DNA strand. Cleaves the DNA backbone by beta-delta elimination to generate a single-strand break at the site of the removed base with both 3'- and 5'-phosphates. In Homo sapiens (Human), this protein is Endonuclease 8-like 2 (NEIL2).